Reading from the N-terminus, the 259-residue chain is Phosphate import ATP-binding protein PstB 1 (259 aa).

The ABC transporter domain maps to 13 to 254; sequence IQVRGLEFFY…PSKTQTEDYI (242 aa). 45-52 serves as a coordination point for ATP; the sequence is GPSGCGKS.

It belongs to the ABC transporter superfamily. Phosphate importer (TC 3.A.1.7) family. In terms of assembly, the complex is composed of two ATP-binding proteins (PstB), two transmembrane proteins (PstC and PstA) and a solute-binding protein (PstS).

The protein localises to the cell inner membrane. It catalyses the reaction phosphate(out) + ATP + H2O = ADP + 2 phosphate(in) + H(+). In terms of biological role, part of the ABC transporter complex PstSACB involved in phosphate import. Responsible for energy coupling to the transport system. The protein is Phosphate import ATP-binding protein PstB 1 of Pseudomonas syringae pv. tomato (strain ATCC BAA-871 / DC3000).